Here is a 308-residue protein sequence, read N- to C-terminus: GTPase IMAP family member 5 (308 aa).

At 1 to 283 (MEHLQKSTYG…VKSCWSSHTA (283 aa)) the chain is on the cytoplasmic side. The AIG1-type G domain maps to 24–227 (SSCLRILLVG…HSNDLFLHAE (204 aa)). GTP-binding positions include 33-41 (GKSGCGKSA), serine 54, 151-153 (RKE), and asparagine 188. The helical; Anchor for type IV membrane protein transmembrane segment at 284-304 (ACALLIVLGLTLLTTFINLCI) threads the bilayer. The Mitochondrial intermembrane portion of the chain corresponds to 305–308 (SRCK).

This sequence belongs to the TRAFAC class TrmE-Era-EngA-EngB-Septin-like GTPase superfamily. AIG1/Toc34/Toc159-like paraseptin GTPase family. IAN subfamily. Interacts with BAD, BAK1, BAX, BCL2, BCL2L1/Bcl-xL and BCL2L11/BimEL. The interaction with BAX is increased, when cells initiate apoptosis upon IL2 withdrawal. Forms a complex with BCL2L1 or MCL1 and HSPA8/HSC70; the interaction between HSPA8 and BCL2L1 or MCL1 is impaired in the absence of GIMAP5. May interact (via N-terminus) with microtubules. In terms of tissue distribution, expressed in thymus (in thymocytes), spleen (in splenocytes), lymph node and lung. Highly expressed in T lymphocytes. Expressed in B cells and in distinct lineages of hematopoietic bone marrow cells, including natural killer, B, T, myeloid and erythroid lineages. Expressed in liver endothelial cells.

It is found in the lysosome. The protein resides in the lysosome membrane. The protein localises to the endosome. It localises to the multivesicular body membrane. Its subcellular location is the endosome membrane. Functionally, plays a role in T lymphocyte development and the optimal generation of CD4/CD8 double-positive thymocytes. Inhibitor of GSK3A. May act by sequestering GSK3A in cytoplasmic vesicles and impairing its translocation to the nucleus. Consequently, impairs GSK3A-dependent transcriptional program and regulation of the DNA damage response occurring during T cells proliferation. Required for the survival of bone marrow hematopoietic stem cells, as well as of peripheral T cells, natural killer (NK) and NK T-cell development and the maintenance of normal liver function. May promote the survival of mature T lymphocytes upon cytokine withdrawal. May regulate Ca(2+) homeostasis by modulating lysosomal Ca(2+) stores, preventing its accumulation in the absence of T cell activation. May play a role in mitochondrial DNA segregation in hematopoietic tissues. Is a regulator of liver endothelial cell homeostasis. This is GTPase IMAP family member 5 (Gimap5) from Mus musculus (Mouse).